Here is a 194-residue protein sequence, read N- to C-terminus: Fe/S biogenesis protein NfuA (194 aa).

Residues cysteine 152 and cysteine 155 each coordinate [4Fe-4S] cluster.

Belongs to the NfuA family. In terms of assembly, homodimer. It depends on [4Fe-4S] cluster as a cofactor.

Involved in iron-sulfur cluster biogenesis. Binds a 4Fe-4S cluster, can transfer this cluster to apoproteins, and thereby intervenes in the maturation of Fe/S proteins. Could also act as a scaffold/chaperone for damaged Fe/S proteins. In Pseudomonas putida (strain GB-1), this protein is Fe/S biogenesis protein NfuA.